The sequence spans 290 residues: Bifunctional protein FolD (290 aa).

NADP(+) contacts are provided by residues 166 to 168 (GAS) and Ile232.

Belongs to the tetrahydrofolate dehydrogenase/cyclohydrolase family. As to quaternary structure, homodimer.

It catalyses the reaction (6R)-5,10-methylene-5,6,7,8-tetrahydrofolate + NADP(+) = (6R)-5,10-methenyltetrahydrofolate + NADPH. The enzyme catalyses (6R)-5,10-methenyltetrahydrofolate + H2O = (6R)-10-formyltetrahydrofolate + H(+). Its pathway is one-carbon metabolism; tetrahydrofolate interconversion. In terms of biological role, catalyzes the oxidation of 5,10-methylenetetrahydrofolate to 5,10-methenyltetrahydrofolate and then the hydrolysis of 5,10-methenyltetrahydrofolate to 10-formyltetrahydrofolate. The sequence is that of Bifunctional protein FolD from Proteus mirabilis (strain HI4320).